Reading from the N-terminus, the 163-residue chain is uncharacterized protein (163 aa).

This is an uncharacterized protein from Drosophila melanogaster (Fruit fly).